The following is a 462-amino-acid chain: Toxin CqTX-A (462 aa).

The signal sequence occupies residues 1-19 (MANMLYFSLLALLFMTGIA). N174 carries an N-linked (GlcNAc...) asparagine glycan.

The protein belongs to the jellyfish toxin family. Type I subfamily. In terms of processing, contains disulfide bonds. N-glycosylated.

Its subcellular location is the secreted. The protein resides in the nematocyst. It localises to the target cell membrane. Critical allergen and main toxic protein of C.quadrigatus venom. Has potent hemolytic activity. Is lethal to crayfish. Causes cutaneous inflammation in humans. May act as a pore-forming toxin, disrupting normal transmembrane ion concentration gradients in susceptible cells. This is Toxin CqTX-A from Chiropsoides quadrigatus (Box jellyfish).